A 213-amino-acid chain; its full sequence is Eukaryotic translation initiation factor 4E (213 aa).

Phosphoserine; by CK2 occurs at positions 2 and 15. Threonine 22 is subject to Phosphothreonine. Phosphoserine is present on residues serine 28 and serine 30. Lysine 114 is covalently cross-linked (Glycyl lysine isopeptide (Lys-Gly) (interchain with G-Cter in ubiquitin)).

It belongs to the eukaryotic initiation factor 4E family. In terms of assembly, component of the eIF4F complex, which composition varies with external and internal environmental conditions. It is composed of at least eIF4A (TIF1/TIF2), eIF4E (TIF45) and eIF4G (TIF4631 or TIF4632). Interacts with PAT1 in a RNA-dependent manner. eIF4E is also known to interact with other partners.

It localises to the cytoplasm. Its subcellular location is the nucleus. Its function is as follows. Recognizes and binds the 7-methylguanosine (m7G)-containing mRNA cap during an early step in the initiation of protein synthesis and facilitates ribosome binding by inducing the unwinding of the mRNAs secondary structures. The chain is Eukaryotic translation initiation factor 4E (CDC33) from Saccharomyces cerevisiae (strain ATCC 204508 / S288c) (Baker's yeast).